Here is a 229-residue protein sequence, read N- to C-terminus: Large ribosomal subunit protein uL1 (229 aa).

It belongs to the universal ribosomal protein uL1 family. In terms of assembly, part of the 50S ribosomal subunit.

Its function is as follows. Binds directly to 23S rRNA. The L1 stalk is quite mobile in the ribosome, and is involved in E site tRNA release. Protein L1 is also a translational repressor protein, it controls the translation of the L11 operon by binding to its mRNA. The chain is Large ribosomal subunit protein uL1 from Clostridium acetobutylicum (strain ATCC 824 / DSM 792 / JCM 1419 / IAM 19013 / LMG 5710 / NBRC 13948 / NRRL B-527 / VKM B-1787 / 2291 / W).